Consider the following 203-residue polypeptide: Small ribosomal subunit protein uS5 (203 aa).

Residues 1–25 (MPGRTRRDGGSESGGKDRRDRRDGG) show a composition bias toward basic and acidic residues. Residues 1-36 (MPGRTRRDGGSESGGKDRRDRRDGGRGGAAQEKTPQ) are disordered. An S5 DRBM domain is found at 36–99 (QFERVVTINR…EEAKKNFFRV (64 aa)).

The protein belongs to the universal ribosomal protein uS5 family. As to quaternary structure, part of the 30S ribosomal subunit. Contacts proteins S4 and S8.

In terms of biological role, with S4 and S12 plays an important role in translational accuracy. Located at the back of the 30S subunit body where it stabilizes the conformation of the head with respect to the body. The polypeptide is Small ribosomal subunit protein uS5 (Saccharopolyspora erythraea (strain ATCC 11635 / DSM 40517 / JCM 4748 / NBRC 13426 / NCIMB 8594 / NRRL 2338)).